Consider the following 341-residue polypeptide: KH domain-containing RNA-binding protein QKI (341 aa).

A qua1 domain; involved in homodimerization region spans residues Pro-11–Leu-82. One can recognise a KH domain in the interval Tyr-87–Val-153. Residues Ala-182–Ala-213 are qua2 domain; involved in RNA binding. Phosphoserine is present on Ser-188. The residue at position 227 (Arg-227) is an Omega-N-methylarginine. Arg-242 carries the asymmetric dimethylarginine; by CARM1; alternate modification. Arg-242 carries the post-translational modification Omega-N-methylarginine; alternate. Position 256 is an omega-N-methylarginine (Arg-256). An SH3-binding motif is present at residues Pro-276–Pro-279. The Nuclear localization signal motif lies at Arg-324–Arg-330.

This sequence belongs to the quaking family. In terms of assembly, homodimer; does not require RNA to homodimerize. Able to heterodimerize with BICC1. In terms of processing, methylated by PRMT1. Tyrosine phosphorylated at its C-terminus, probably by FYN. Phosphorylation leads to decreased mRNA-binding affinity, affecting transport and/or stabilization of MBP mRNA. Post-translationally, ubiquitinated by RNF6 in macrophages, leading to its degradation. As to expression, present in myelinating oligodendrocytes (at protein level).

The protein resides in the nucleus. The protein localises to the cytoplasm. RNA reader protein, which recognizes and binds specific RNAs, thereby regulating RNA metabolic processes, such as pre-mRNA splicing, circular RNA (circRNA) formation, mRNA export, mRNA stability and/or translation. Involved in various cellular processes, such as mRNA storage into stress granules, apoptosis, lipid deposition, interferon response, glial cell fate and development. Binds to the 5'-NACUAAY-N(1,20)-UAAY-3' RNA core sequence. Acts as a mRNA modification reader that specifically recognizes and binds mRNA transcripts modified by internal N(7)-methylguanine (m7G). Promotes the formation of circular RNAs (circRNAs) during the epithelial to mesenchymal transition and in cardiomyocytes: acts by binding to sites flanking circRNA-forming exons. CircRNAs are produced by back-splicing circularization of pre-mRNAs. Plays a central role in myelinization via 3 distinct mechanisms. First, acts by protecting and promoting stability of target mRNAs such as MBP, SIRT2 and CDKN1B, which promotes oligodendrocyte differentiation. Second, participates in mRNA transport by regulating the nuclear export of MBP mRNA. Finally, indirectly regulates mRNA splicing of MAG pre-mRNA during oligodendrocyte differentiation by acting as a negative regulator of MAG exon 12 alternative splicing: acts by binding to HNRNPA1 mRNA splicing factor, preventing its translation. Involved in microglia differentiation and remyelination by regulating microexon alternative splicing of the Rho GTPase pathway. Involved in macrophage differentiation: promotes monocyte differentiation by regulating pre-mRNA splicing in naive peripheral blood monocytes. Acts as an important regulator of muscle development: required for the contractile function of cardiomyocytes by regulating alternative splicing of cardiomyocyte transcripts. Acts as a negative regulator of thermogenesis by decreasing stability, nuclear export and translation of mRNAs encoding PPARGC1A and UCP1. Also required for visceral endoderm function and blood vessel development. May also play a role in smooth muscle development. In addition to its RNA-binding activity, also acts as a nuclear transcription coactivator for SREBF2/SREBP2. The polypeptide is KH domain-containing RNA-binding protein QKI (Rattus norvegicus (Rat)).